The primary structure comprises 608 residues: Zinc finger protein 652 (608 aa).

At serine 57 the chain carries Phosphoserine. The disordered stretch occupies residues valine 61 to proline 232. A compositionally biased stretch (basic and acidic residues) spans histidine 71–arginine 97. Composition is skewed to acidic residues over residues glutamate 98 to glutamate 108 and glutamate 151 to threonine 162. Serine 100 is subject to Phosphoserine. Threonine 103 bears the Phosphothreonine mark. Over residues alanine 194 to threonine 208 the composition is skewed to low complexity. Phosphoserine is present on residues serine 196 and serine 203. The segment at leucine 244–histidine 267 adopts a C2H2-type 1 zinc-finger fold. Residues glutamine 271–aspartate 293 form a C2H2-type 2; degenerate zinc finger. C2H2-type zinc fingers lie at residues isoleucine 298–histidine 321, phenylalanine 328–histidine 350, phenylalanine 356–histidine 378, phenylalanine 384–histidine 406, phenylalanine 412–histidine 434, and phenylalanine 440–histidine 462. The C2H2-type 9; degenerate zinc-finger motif lies at tyrosine 468–phenylalanine 491. The mediates interaction with CBFA2T3 stretch occupies residues valine 497–histidine 608.

The protein belongs to the krueppel C2H2-type zinc-finger protein family. In terms of assembly, interacts with CBFA2T3.

It localises to the nucleus. In terms of biological role, functions as a transcriptional repressor. This Mus musculus (Mouse) protein is Zinc finger protein 652 (Znf652).